The primary structure comprises 351 residues: Cyanuric acid amidohydrolase (351 aa).

Residues 1–96 (MPSLRAHVFR…HWTVFARETV (96 aa)) form an RU A region. Substrate-binding positions include Arg-53 and 77–78 (SG). The interval 103–240 (ALAIGVSRTP…HEIIVLGMSA (138 aa)) is RU B. The active site involves Lys-153. Substrate contacts are provided by residues Arg-185 and 223 to 224 (SS). Ser-223 acts as the Nucleophile in catalysis. The segment at 246–351 (LSIDHAVMRD…PVAIIVEKEQ (106 aa)) is RU C. Glu-283 is a binding site for Mg(2+). Residues Arg-310 and 329–330 (SG) contribute to the substrate site. Ala-332, Gln-335, Gly-336, Pro-337, and Gly-340 together coordinate Mg(2+).

The protein belongs to the cyclic amide hydrolase (CyAH) family. In terms of assembly, homotetramer.

The catalysed reaction is cyanurate + H2O = 1-carboxybiuret + H(+). The protein operates within xenobiotic degradation; atrazine degradation; biuret from cyanurate: step 1/1. With respect to regulation, inhibited by barbituric acid. Its function is as follows. Responsible for the hydrolysis of cyanuric acid, an intermediate formed during catabolism of s-triazine based compounds in herbicides such as atrazine and polymers such as melamine. Catalyzes the hydrolytic opening of the s-triazine ring of cyanuric acid (2,4,6-trihydroxy-s-triazine) to yield carbon dioxide and carboxybiuret, which spontaneously decarboxylates to biuret. The protein is Cyanuric acid amidohydrolase of Rhizobium johnstonii (strain DSM 114642 / LMG 32736 / 3841) (Rhizobium leguminosarum bv. viciae).